Consider the following 1096-residue polypeptide: Adenylate-forming reductase Nps9 (1096 aa).

The segment at 39-352 is adenylation (A) domain; that stretch reads DDTLTEISFL…TTEFGAPTQL (314 aa). AMP contacts are provided by residues H236, 339 to 340, T344, and 425 to 428; these read VQ and IIGR. In terms of domain architecture, Carrier spans 569-656; sequence EWTVSTLEHW…LLADRVAKIA (88 aa). The residue at position 605 (S605) is an O-(pantetheine 4'-phosphoryl)serine. Residues 716-952 are reductase (R) domain; the sequence is LTGSTGGLGS…MPAEKVSAAI (237 aa). NADP(+) contacts are provided by residues 720–723, 807–809, Y880, and K884; these read TGGL and SAW.

The protein belongs to the adenylate-forming reductase family.

Functionally, adenylate-forming reductase, a natural product biosynthesis enzyme that resembles non-ribosomal peptide synthetases, yet serves to modify one substrate, rather than to condense two or more building blocks. The A-domain preferentially accepts L-threonine as substrate. The natural product of the enzyme is not yet known. The chain is Adenylate-forming reductase Nps9 from Serpula lacrymans var. lacrymans (strain S7.9) (Dry rot fungus).